A 361-amino-acid polypeptide reads, in one-letter code: Glutamate 5-kinase (361 aa).

K7 provides a ligand contact to ATP. Positions 47, 134, and 146 each coordinate substrate. ATP-binding positions include T166–D167 and T209–K215. The region spanning L274 to N345 is the PUA domain.

The protein belongs to the glutamate 5-kinase family.

The protein resides in the cytoplasm. The catalysed reaction is L-glutamate + ATP = L-glutamyl 5-phosphate + ADP. It participates in amino-acid biosynthesis; L-proline biosynthesis; L-glutamate 5-semialdehyde from L-glutamate: step 1/2. Its function is as follows. Catalyzes the transfer of a phosphate group to glutamate to form L-glutamate 5-phosphate. In Prochlorococcus marinus (strain MIT 9313), this protein is Glutamate 5-kinase.